Consider the following 504-residue polypeptide: ATP synthase subunit alpha 1 (504 aa).

Residue 172–179 (GDRQTGKT) participates in ATP binding.

It belongs to the ATPase alpha/beta chains family. In terms of assembly, F-type ATPases have 2 components, CF(1) - the catalytic core - and CF(0) - the membrane proton channel. CF(1) has five subunits: alpha(3), beta(3), gamma(1), delta(1), epsilon(1). CF(0) has three main subunits: a(1), b(2) and c(9-12). The alpha and beta chains form an alternating ring which encloses part of the gamma chain. CF(1) is attached to CF(0) by a central stalk formed by the gamma and epsilon chains, while a peripheral stalk is formed by the delta and b chains.

Its subcellular location is the cell inner membrane. It carries out the reaction ATP + H2O + 4 H(+)(in) = ADP + phosphate + 5 H(+)(out). Its function is as follows. Produces ATP from ADP in the presence of a proton gradient across the membrane. The alpha chain is a regulatory subunit. The polypeptide is ATP synthase subunit alpha 1 (Rhodopirellula baltica (strain DSM 10527 / NCIMB 13988 / SH1)).